The chain runs to 469 residues: Programmed cell death protein 4 (469 aa).

The residue at position 1 (Met-1) is an N-acetylmethionine. Over residues 1 to 23 (MDIENEQTLNVNPTDPDNLSDSL) the composition is skewed to polar residues. 2 disordered regions span residues 1–37 (MDIE…EEIK) and 58–128 (KAKR…GTPG). Ser-25 bears the Phosphoserine mark. The Nuclear localization signal motif lies at 58 to 64 (KAKRRLR). Ser-67 carries the post-translational modification Phosphoserine; by PKB and RPS6KB1. 5 positions are modified to phosphoserine: Ser-68, Ser-71, Ser-76, Ser-78, and Ser-94. Residues 70–76 (DSGRGDS) carry the Phosphodegron motif. A compositionally biased stretch (gly residues) spans 114-125 (KKGGAGGKGVWG). Position 152 is a phosphotyrosine (Tyr-152). The MI 1 domain maps to 163–284 (AFEKTLTPII…CNTYIDSYKG (122 aa)). Residues Ser-313 and Ser-317 each carry the phosphoserine modification. An MI 2 domain is found at 326–449 (HLVKEIDMLL…SKQLRDLCPS (124 aa)). A Nuclear localization signal motif is present at residues 448–454 (PSRGRKR). At Ser-457 the chain carries Phosphoserine; by PKB.

It belongs to the PDCD4 family. In terms of assembly, interacts (via MI domains) with EIF4A1 and EIF4A2 (via N-terminal domain). Heterotrimer with EIF4A1; one molecule of PDCD4 binds two molecules of EIF4A1. Interacts with EIF4G1. May form a complex with EIF4A1 and EIF4G1. The interaction between PDCD4 and EIF4A1 interferes with the interaction between EIF4A1 and EIF4G. When phosphorylated, interacts with BTRC and FBXW11. In terms of processing, polyubiquitinated, leading to its proteasomal degradation. Rapidly degraded in response to mitogens. Phosphorylation of the phosphodegron promotes interaction with BTRC and proteasomal degradation. Post-translationally, phosphorylated at Ser-67 by RPS6KB1 in response to mitogens; phosphorylation promotes proteasomal degradation of PDCD4. Expressed ubiquitously. Highyly expressed in thymus and liver. Moderately expressed in brain, kidney and spleen; weakly in lung and heart. Expression is up- or down-regulated in response to apoptosis inducers. Regulated by many programmed cell death-inducing stimuli.

It localises to the nucleus. Its subcellular location is the cytoplasm. Functionally, inhibits translation initiation and cap-dependent translation. May excert its function by hindering the interaction between EIF4A1 and EIF4G. Inhibits the helicase activity of EIF4A. Modulates the activation of JUN kinase. Down-regulates the expression of MAP4K1, thus inhibiting events important in driving invasion, namely, MAPK85 activation and consequent JUN-dependent transcription. May play a role in apoptosis. Tumor suppressor. Inhibits tumor promoter-induced neoplastic transformation. Binds RNA. The polypeptide is Programmed cell death protein 4 (Pdcd4) (Mus musculus (Mouse)).